Consider the following 512-residue polypeptide: Cytochrome P450 monooxygenase TwmD (512 aa).

C454 is a heme binding site.

The protein belongs to the cytochrome P450 family. It depends on heme as a cofactor.

Its pathway is secondary metabolite biosynthesis. Its function is as follows. Cytochrome P450 monooxygenase; part of the gene cluster that mediates the biosynthesis of wortmanamides A and B, reduced long-chain polyketides amidated with a specific omega-amino acid, 5-aminopentanoic acid (5PA). The PKS modules of TwmB are involved in the synthesis of the polyketide backbone, whereas the non-canonical C domain of TwmB is a bonafide condensation domain that specifically selects 5PA and catalyzes amidation to release polyketide chain. The C domain clearly prefers C16 and C18 fatty acyl substrates, which is consistent with simultaneous formation of both octaketide and nonaketide acyl amides wortmanamides A and B. Because TwmB lacks a designated enoylreductase (ER) domain, the required activity is provided the enoyl reductase TwmE. The roles of the remaining enzymes have still to be clarified. The sequence is that of Cytochrome P450 monooxygenase TwmD from Talaromyces wortmannii (Penicillium wortmannii).